Here is a 151-residue protein sequence, read N- to C-terminus: MSKLPALVSLRMNEIRGIYIETNNRVVEEMDAVIDEFAKDVGSSPDISTNVRTYLEERIRYIREFVVDHIGFSISEFRTLYNPNGNESIKSRRFPKFITEALERSFEIDQYPSEAEKARLAKICKLSTKQINNWFTNKRNRTKGHEGGRQY.

The homeobox DNA-binding region spans 87–146 (ESIKSRRFPKFITEALERSFEIDQYPSEAEKARLAKICKLSTKQINNWFTNKRNRTKGHE).

Its subcellular location is the nucleus. The sequence is that of Homeobox protein HD-1 (HD-1) from Encephalitozoon cuniculi (strain GB-M1) (Microsporidian parasite).